A 78-amino-acid chain; its full sequence is Large ribosomal subunit protein bL28 (78 aa).

Belongs to the bacterial ribosomal protein bL28 family.

The protein is Large ribosomal subunit protein bL28 of Microcystis aeruginosa (strain NIES-843 / IAM M-2473).